We begin with the raw amino-acid sequence, 97 residues long: MEARDIIIRPVITEKSMNLMSERKYTFIVDKRANKIQIKKAVEDIFGVKVDKVYTMNYKGKPKRMGKYEGRTEAYKKAIVKLTPDSKGIEFFEGLQA.

This sequence belongs to the universal ribosomal protein uL23 family. As to quaternary structure, part of the 50S ribosomal subunit. Contacts protein L29, and trigger factor when it is bound to the ribosome.

Functionally, one of the early assembly proteins it binds 23S rRNA. One of the proteins that surrounds the polypeptide exit tunnel on the outside of the ribosome. Forms the main docking site for trigger factor binding to the ribosome. The chain is Large ribosomal subunit protein uL23 from Thermoanaerobacter pseudethanolicus (strain ATCC 33223 / 39E) (Clostridium thermohydrosulfuricum).